The sequence spans 360 residues: Photosystem II protein D1 (360 aa).

Transmembrane regions (helical) follow at residues 29 to 46 (YIGW…TATS), 118 to 133 (HFFI…EWEL), and 142 to 156 (WIAV…AATA). Residue histidine 118 participates in chlorophyll a binding. Tyrosine 126 contacts pheophytin a. Positions 170 and 189 each coordinate [CaMn4O5] cluster. The helical transmembrane segment at 197–218 (FHMMGVAGVFGGSLFSAMHGSL) threads the bilayer. Histidine 198 contributes to the chlorophyll a binding site. A quinone-binding positions include histidine 215 and 264-265 (SF). Histidine 215 serves as a coordination point for Fe cation. Fe cation is bound at residue histidine 272. The helical transmembrane segment at 274–288 (FLALWPVVCICVTAL) threads the bilayer. The [CaMn4O5] cluster site is built by histidine 332, glutamate 333, aspartate 342, and alanine 344. Positions 345–360 (SEVSLPVALNKVEING) are excised as a propeptide.

Belongs to the reaction center PufL/M/PsbA/D family. As to quaternary structure, PSII is composed of 1 copy each of membrane proteins PsbA, PsbB, PsbC, PsbD, PsbE, PsbF, PsbH, PsbI, PsbJ, PsbK, PsbL, PsbM, PsbT, PsbY, PsbZ, Psb30/Ycf12, at least 3 peripheral proteins of the oxygen-evolving complex and a large number of cofactors. It forms dimeric complexes. The D1/D2 heterodimer binds P680, chlorophylls that are the primary electron donor of PSII, and subsequent electron acceptors. It shares a non-heme iron and each subunit binds pheophytin, quinone, additional chlorophylls, carotenoids and lipids. D1 provides most of the ligands for the Mn4-Ca-O5 cluster of the oxygen-evolving complex (OEC). There is also a Cl(-1) ion associated with D1 and D2, which is required for oxygen evolution. The PSII complex binds additional chlorophylls, carotenoids and specific lipids. serves as cofactor. Post-translationally, tyr-161 forms a radical intermediate that is referred to as redox-active TyrZ, YZ or Y-Z. C-terminally processed by CTPA; processing is essential to allow assembly of the oxygen-evolving complex and thus photosynthetic growth.

Its subcellular location is the plastid. It is found in the chloroplast thylakoid membrane. It carries out the reaction 2 a plastoquinone + 4 hnu + 2 H2O = 2 a plastoquinol + O2. Its function is as follows. Photosystem II (PSII) is a light-driven water:plastoquinone oxidoreductase that uses light energy to abstract electrons from H(2)O, generating O(2) and a proton gradient subsequently used for ATP formation. It consists of a core antenna complex that captures photons, and an electron transfer chain that converts photonic excitation into a charge separation. The D1/D2 (PsbA/PsbD) reaction center heterodimer binds P680, the primary electron donor of PSII as well as several subsequent electron acceptors. The sequence is that of Photosystem II protein D1 from Galdieria sulphuraria (Red alga).